A 1786-amino-acid chain; its full sequence is Laminin subunit beta-1 (1786 aa).

The first 21 residues, 1–21 (MGLLQVFAFGVLALWGTRVCA), serve as a signal peptide directing secretion. In terms of domain architecture, Laminin N-terminal spans 31–270 (AEGSCYPATG…AVYDMVVRGN (240 aa)). Residue Asn120 is glycosylated (N-linked (GlcNAc...) asparagine). Ser250 carries the phosphoserine modification. Disulfide bonds link Cys271/Cys280, Cys273/Cys298, Cys300/Cys309, Cys312/Cys332, Cys335/Cys344, Cys337/Cys362, Cys365/Cys374, Cys377/Cys395, Cys398/Cys411, Cys400/Cys426, Cys428/Cys437, Cys440/Cys455, Cys458/Cys472, Cys460/Cys479, Cys481/Cys490, Cys493/Cys507, Cys510/Cys522, Cys512/Cys529, and Cys531/Cys540. 4 consecutive Laminin EGF-like domains span residues 271–334 (CFCY…ACKK), 335–397 (CNCN…LCEP), 398–457 (CTCD…GCKS), and 458–509 (CACN…GCRP). Asn356 carries N-linked (GlcNAc...) asparagine glycosylation. The Laminin EGF-like 5; truncated domain occupies 510-540 (CDCDLGGALNNSCSEDSGQCSCLPHMIGRQC). N-linked (GlcNAc...) asparagine glycosylation occurs at Asn519. The region spanning 549–767 (FTTLDHYIYE…IIFSISALIH (219 aa)) is the Laminin IV type B domain. N-linked (GlcNAc...) asparagine glycosylation is present at Asn677. 32 cysteine pairs are disulfide-bonded: Cys773–Cys785, Cys775–Cys792, Cys794–Cys803, Cys806–Cys818, Cys821–Cys833, Cys823–Cys840, Cys842–Cys851, Cys854–Cys864, Cys867–Cys876, Cys869–Cys883, Cys886–Cys895, Cys898–Cys914, Cys917–Cys933, Cys919–Cys944, Cys946–Cys955, Cys958–Cys973, Cys976–Cys990, Cys978–Cys997, Cys1000–Cys1009, Cys1012–Cys1025, Cys1028–Cys1040, Cys1030–Cys1054, Cys1056–Cys1065, Cys1068–Cys1081, Cys1084–Cys1096, Cys1086–Cys1103, Cys1105–Cys1114, Cys1117–Cys1129, Cys1132–Cys1144, Cys1134–Cys1151, Cys1153–Cys1162, and Cys1165–Cys1176. 8 Laminin EGF-like domains span residues 773–820 (CECD…GCKP), 821–866 (CDCH…SCQP), 867–916 (CQCN…HCRP), 917–975 (CPCP…SCQP), 976–1027 (CQCH…DCRK), 1028–1083 (CVCN…GCGP), 1084–1131 (CNCN…ECRA), and 1132–1178 (CDCD…DCTP). Asn1041 carries N-linked (GlcNAc...) asparagine glycosylation. Residues 1179-1397 (CHQCFALWDA…LDLSAVAQMT (219 aa)) form a domain II region. Residues Asn1195, Asn1279, Asn1336, and Asn1343 are each glycosylated (N-linked (GlcNAc...) asparagine). Residues 1216-1315 (YRETVDSVEK…LEFIKNSDIQ (100 aa)) adopt a coiled-coil conformation. Residues 1368 to 1388 (KEQQEEQARLLDELAGKLQSL) are a coiled coil. The segment at 1398-1430 (CGTPPGADCSESECGGPNCRTDEGEKKCGGPGC) is domain alpha. The segment at 1431-1786 (GGLVTVAHSA…EKVAVYSTCL (356 aa)) is domain I. The stretch at 1448–1778 (DRDVLSALAE…RSLLKDISEK (331 aa)) forms a coiled coil. Asn1487 carries an N-linked (GlcNAc...) asparagine glycan. A Phosphoserine modification is found at Ser1496. Asn1542 and Asn1643 each carry an N-linked (GlcNAc...) asparagine glycan. Ser1666 is modified (phosphoserine).

Laminin is a complex glycoprotein, consisting of three different polypeptide chains (alpha, beta, gamma), which are bound to each other by disulfide bonds into a cross-shaped molecule comprising one long and three short arms with globules at each end. Beta-1 is a subunit of laminin-1 (laminin-111 or EHS laminin), laminin-2 (laminin-211 or merosin), laminin-6 (laminin-311 or K-laminin), laminin-8 (laminin-411), laminin-10 (laminin-511) and laminin-12 (laminin-213). Interacts with ITGB1. Widely expressed in the embryo. High levels are detected in the cerebellar basement membrane, at postnatal day 7.

The protein resides in the secreted. The protein localises to the extracellular space. It localises to the extracellular matrix. It is found in the basement membrane. In terms of biological role, binding to cells via a high affinity receptor, laminin is thought to mediate the attachment, migration and organization of cells into tissues during embryonic development by interacting with other extracellular matrix components. Involved in the organization of the laminar architecture of the cerebral cortex. It is probably required for the integrity of the basement membrane/glia limitans that serves as an anchor point for the endfeet of radial glial cells and as a physical barrier to migrating neurons. Radial glial cells play a central role in cerebral cortical development, where they act both as the proliferative unit of the cerebral cortex and a scaffold for neurons migrating toward the pial surface. This chain is Laminin subunit beta-1 (Lamb1), found in Mus musculus (Mouse).